The following is a 693-amino-acid chain: Sodium-dependent dopamine transporter (693 aa).

Over 1 to 56 (MSEGRCSVAHMSSVVAPAKEANAMGPKAVELVLVKEQNGVQLTNSTLLNPPQSPTE) the chain is Cytoplasmic. The chain crosses the membrane as a discontinuously helical span at residues 57 to 95 (AQDRETWSKKADFLLSVIGFAVDLANVWRFPYLCYKNGG). Residues Gly-75, Ala-77, Val-78, Asp-79, and Asn-82 each coordinate Na(+). A dopamine-binding site is contributed by Asp-79. 2 helical membrane passes run 96–127 (GAFL…NREG) and 128–171 (AAGV…LSSF). Dopamine contacts are provided by Ser-149 and Gly-153. Residues 172-233 (TTELPWTHCN…SQGIDDLGPP (62 aa)) are Extracellular-facing. An intrachain disulfide couples Cys-180 to Cys-189. N-linked (GlcNAc...) asparagine glycans are attached at residues Asn-181, Asn-196, and Asn-202. The next 2 helical transmembrane spans lie at 234–253 (RWQL…FSLW) and 254–284 (KGVK…GITL). The Extracellular portion of the chain corresponds to 285 to 303 (PGAVDAIRAYLSVDFHRLC). A discontinuously helical transmembrane segment spans residues 304-332 (EASVWIDAAIQICFSLGVGLGVLIAFSSY). Gln-314 is a binding site for chloride. Residue Phe-317 participates in dopamine binding. Na(+)-binding residues include Ser-318 and Asn-350. Residue Ser-318 participates in chloride binding. The helical transmembrane segment at 333–373 (NKFTNNCYRDAIITTSVNSLTSFSSGFVVFSFLGYMAQKHS) threads the bilayer. Ser-354 contributes to the chloride binding site. The Extracellular portion of the chain corresponds to 374 to 397 (VPIGDVAKDGPGLIFIIYPEALAT). The next 3 membrane-spanning stretches (helical) occupy residues 398–439 (LPLS…QLLH), 440–463 (RHRE…CVTN), and 464–496 (GGIY…AWFY). Positions 415, 418, and 419 each coordinate Na(+). The dopamine site is built by Ser-419 and Ala-420. The Cytoplasmic portion of the chain corresponds to 497-513 (GVWQFSDDIKQMTGRRP). Residues 514–539 (SLYWRLCWKFVSPCFLLFVVVVSIAT) form a helical membrane-spanning segment. At 540–550 (FRPPHYGAYVF) the chain is on the extracellular side. Residues 551-580 (PEWATALGWAIAASSMSVVPIYAAYKLCSL) form a helical membrane-spanning segment. Positions 558-587 (GWAIAASSMSVVPIYAAYKLCSLPGSSREK) are interaction with TGFB1I1. Over 581–693 (PGSSREKLAY…VESTGLCSVY (113 aa)) the chain is Cytoplasmic.

Belongs to the sodium:neurotransmitter symporter (SNF) (TC 2.A.22) family. SLC6A3 subfamily. Monomer. Homooligomer; disulfide-linked. Interacts with PRKCABP and TGFB1I1. Interacts (via N-terminus) with SYNGR3 (via N-terminus). Interacts with SLC18A2. Interacts with TOR1A (ATP-bound); TOR1A regulates SLC6A3 subcellular location. Interacts with alpha-synuclein/SNCA. Interacts with SEPTIN4. In terms of tissue distribution, expressed in the neurons of the substantia nigra of the brain.

The protein localises to the cell membrane. The protein resides in the cell projection. Its subcellular location is the neuron projection. It is found in the axon. The enzyme catalyses dopamine(out) + chloride(out) + Na(+)(out) = dopamine(in) + chloride(in) + Na(+)(in). It catalyses the reaction (R)-noradrenaline(out) + chloride(out) + Na(+)(out) = (R)-noradrenaline(in) + chloride(in) + Na(+)(in). The catalysed reaction is dopamine(out) + chloride(out) + 2 Na(+)(out) = dopamine(in) + chloride(in) + 2 Na(+)(in). With respect to regulation, inhibited by GBR 12909 dihydrochloride, amphetamine and cocaine. Inhibited by zinc ions. In terms of biological role, mediates sodium- and chloride-dependent transport of dopamine. Also mediates sodium- and chloride-dependent transport of norepinephrine (also known as noradrenaline). Regulator of light-dependent retinal hyaloid vessel regression, downstream of OPN5 signaling. This chain is Sodium-dependent dopamine transporter (SLC6A3), found in Bos taurus (Bovine).